Reading from the N-terminus, the 305-residue chain is Oligopeptide transport ATP-binding protein OppF (305 aa).

An ABC transporter domain is found at 6 to 251; it reads LEIKHLKQHF…PLHPYTKSLL (246 aa). 42-49 is an ATP binding site; it reads GESGCGKS.

Belongs to the ABC transporter superfamily. The complex is composed of two ATP-binding proteins (OppD and OppF), two transmembrane proteins (OppB and OppC) and a solute-binding protein (OppA).

It localises to the cell membrane. It catalyses the reaction a [peptide](out) + ATP + H2O = a [peptide](in) + ADP + phosphate + H(+). Part of the ABC transporter complex OppABCDF involved in the uptake of oligopeptides. Probably responsible for energy coupling to the transport system. Required for genetic competence but not for peptide transport or for sporulation. The sequence is that of Oligopeptide transport ATP-binding protein OppF from Bacillus subtilis (strain 168).